A 702-amino-acid chain; its full sequence is Kinesin-like protein KIF3A (702 aa).

The Kinesin motor domain maps to 14–345 (NVKVVVRCRP…LRYANRAKNI (332 aa)). 100-107 (GQTGTGKT) serves as a coordination point for ATP. Residues 355–593 (PKDALLRQFQ…LSRELRLQML (239 aa)) are a coiled coil. Disordered stretches follow at residues 372–424 (KKLE…KMIE) and 667–702 (LMKLERPRTSKGKARPKTGRRKRSAKPETVIDSLLQ). Positions 376–400 (EGEEISGSDISGSEEDDDEEGEIGE) are enriched in acidic residues. The span at 410-424 (DQAGKKKVSPDKMIE) shows a compositional bias: basic and acidic residues. Positions 600 to 702 (PRDYQEMIEN…PETVIDSLLQ (103 aa)) are globular. Positions 675 to 690 (TSKGKARPKTGRRKRS) are enriched in basic residues. Residue Ser-690 is modified to Phosphoserine.

This sequence belongs to the TRAFAC class myosin-kinesin ATPase superfamily. Kinesin family. Kinesin II subfamily. As to quaternary structure, heterodimer of KIF3A and KIF3B. Interacts with CIMAP3. Interacts with CLN3. Interacts with DCTN1. Interacts with FLCN. Interacts with AP3B1.

The protein resides in the cytoplasm. Its subcellular location is the cytoskeleton. It is found in the cell projection. It localises to the cilium. The protein localises to the microtubule organizing center. The protein resides in the centrosome. Its subcellular location is the centriole. Functionally, microtubule-based anterograde translocator for membranous organelles. Plus end-directed microtubule sliding activity in vitro. Plays a role in primary cilia formation. Plays a role in centriole cohesion and subdistal appendage organization and function. Regulates the formation of the subdistal appendage via recruitment of DCTN1 to the centriole. Also required for ciliary basal feet formation and microtubule anchoring to mother centriole. This chain is Kinesin-like protein KIF3A (KIF3A), found in Pongo abelii (Sumatran orangutan).